The chain runs to 201 residues: Arachin 25 kDa protein (201 aa).

As to quaternary structure, this is one of six apparently different protein chains that constitute the peanut protein arachin.

This is Arachin 25 kDa protein from Arachis hypogaea (Peanut).